The sequence spans 421 residues: Enolase (421 aa).

Gln165 serves as a coordination point for (2R)-2-phosphoglycerate. The Proton donor role is filled by Glu207. Mg(2+)-binding residues include Asp244, Glu285, and Asp312. Residues Lys337, Arg366, Ser367, and Lys388 each contribute to the (2R)-2-phosphoglycerate site. Lys337 acts as the Proton acceptor in catalysis.

It belongs to the enolase family. Mg(2+) serves as cofactor.

The protein localises to the cytoplasm. The protein resides in the secreted. It is found in the cell surface. The catalysed reaction is (2R)-2-phosphoglycerate = phosphoenolpyruvate + H2O. Its pathway is carbohydrate degradation; glycolysis; pyruvate from D-glyceraldehyde 3-phosphate: step 4/5. Functionally, catalyzes the reversible conversion of 2-phosphoglycerate (2-PG) into phosphoenolpyruvate (PEP). It is essential for the degradation of carbohydrates via glycolysis. This is Enolase from Ehrlichia ruminantium (strain Welgevonden).